Here is an 89-residue protein sequence, read N- to C-terminus: Small ribosomal subunit protein uS14 (89 aa).

The protein belongs to the universal ribosomal protein uS14 family. Part of the 30S ribosomal subunit. Contacts proteins S3 and S10.

Its function is as follows. Binds 16S rRNA, required for the assembly of 30S particles and may also be responsible for determining the conformation of the 16S rRNA at the A site. This Parabacteroides distasonis (strain ATCC 8503 / DSM 20701 / CIP 104284 / JCM 5825 / NCTC 11152) protein is Small ribosomal subunit protein uS14.